The primary structure comprises 1454 residues: ABC transporter G family member 43 (1454 aa).

The segment at 23-47 is disordered; the sequence is ARSLRDGDDPFRRSAAASRRDAGDD. Positions 25–44 are enriched in basic and acidic residues; sequence SLRDGDDPFRRSAAASRRDA. N-linked (GlcNAc...) asparagine glycosylation is present at Asn163. Residues 170 to 444 enclose the ABC transporter 1 domain; it reads EGLVSLFISS…FESAGFRCPE (275 aa). 204 to 211 provides a ligand contact to ATP; it reads GPPSSGKS. An N-linked (GlcNAc...) asparagine glycan is attached at Asn393. Residues 524–735 enclose the ABC transmembrane type-2 1 domain; sequence LKAVMSREWL…SNNALSVNEF (212 aa). 6 helical membrane passes run 540–560, 577–597, 613–630, 637–656, 659–679, and 684–704; these read FLFI…MTLF, VGAL…ELQL, FFPA…KVPL, LWIV…GRFF, FLAY…LGAI, and VVAN…GGFL. Residue Asn745 is glycosylated (N-linked (GlcNAc...) asparagine). Residues 775–795 form a helical membrane-spanning segment; it reads IGAMIGFMIVFNILYLCALTF. Residues 804 to 823 are disordered; that stretch reads TVVSDDDTKSELEAESNQEQ. N-linked (GlcNAc...) asparagine glycans are attached at residues Asn829 and Asn832. Residues 852–1104 enclose the ABC transporter 2 domain; sequence LSFNHMNYYV…ILVEYFEAIP (253 aa). 897 to 904 lines the ATP pocket; it reads GVSGAGKT. Residue Asn951 is glycosylated (N-linked (GlcNAc...) asparagine). The ABC transmembrane type-2 2 domain maps to 1178 to 1391; it reads QCVANTWKQF…TIYGVIASQF (214 aa). The next 7 helical transmembrane spans lie at 1196-1216, 1236-1256, 1284-1304, 1314-1334, 1341-1361, 1372-1392, and 1423-1443; these read YNAM…TVFW, YAAV…VVSV, FCYS…MIGY, FLFF…MLVA, LAAV…GFII, WFYW…SQFA, and FLGY…FLFG.

Belongs to the ABC transporter superfamily. ABCG family. PDR (TC 3.A.1.205) subfamily. As to expression, specifically expressed in the vasculature of roots, stems, panicles, sheaths and leaves.

The protein localises to the cell membrane. ABC transporter modulating cadmium (Cd) import, thus controlling Cd(2+) accumulation to prevent phytotoxicity. Confers high tolerance to Cd in yeast. Prevents leaf bacteria proliferation, such as Xanthomonas oryzae pv. oryzicola (Xoc) RS105 and X.oryzae pv. oryzae (Xoo) PXO99, by triggering Cd accumulation, which in turn impairs bacterial virulence factors. In Oryza sativa subsp. japonica (Rice), this protein is ABC transporter G family member 43.